A 125-amino-acid polypeptide reads, in one-letter code: Large ribosomal subunit protein bL12 (125 aa).

It belongs to the bacterial ribosomal protein bL12 family. As to quaternary structure, homodimer. Part of the ribosomal stalk of the 50S ribosomal subunit. Forms a multimeric L10(L12)X complex, where L10 forms an elongated spine to which 2 to 4 L12 dimers bind in a sequential fashion. Binds GTP-bound translation factors.

Its function is as follows. Forms part of the ribosomal stalk which helps the ribosome interact with GTP-bound translation factors. Is thus essential for accurate translation. This is Large ribosomal subunit protein bL12 from Methylobacterium radiotolerans (strain ATCC 27329 / DSM 1819 / JCM 2831 / NBRC 15690 / NCIMB 10815 / 0-1).